The chain runs to 230 residues: Endonuclease NucS (230 aa).

The protein belongs to the NucS endonuclease family.

The protein localises to the cytoplasm. In terms of biological role, cleaves both 3' and 5' ssDNA extremities of branched DNA structures. This is Endonuclease NucS from Corynebacterium glutamicum (strain ATCC 13032 / DSM 20300 / JCM 1318 / BCRC 11384 / CCUG 27702 / LMG 3730 / NBRC 12168 / NCIMB 10025 / NRRL B-2784 / 534).